We begin with the raw amino-acid sequence, 230 residues long: Lecithin retinol acyltransferase (230 aa).

The Cytoplasmic portion of the chain corresponds to 1–194 (MKNPMLEVVS…VKIIIRDQRS (194 aa)). The LRAT domain maps to 50–177 (VLEVPRTHLT…CRYGTPISPQ (128 aa)). Active-site residues include H60 and H72. The Acyl-thioester intermediate role is filled by C161. A helical membrane pass occupies residues 195-215 (VLASAVLGLASIVCTGLVSYT). Residues 216-230 (TLPAIFIPFFLWMAG) lie on the Lumenal side of the membrane.

Belongs to the H-rev107 family. In terms of tissue distribution, hepatic stellate cells and endothelial cells (at protein level). Found at high levels in testis and liver, followed by retinal pigment epithelium, small intestine, prostate, pancreas and colon. Low expression observed in brain. In fetal tissues, expressed in retinal pigment epithelium and liver, and barely in the brain.

Its subcellular location is the endoplasmic reticulum membrane. The protein localises to the rough endoplasmic reticulum. The protein resides in the endosome. It is found in the multivesicular body. It localises to the cytoplasm. Its subcellular location is the perinuclear region. It carries out the reaction all-trans-retinol--[retinol-binding protein] + a 1,2-diacyl-sn-glycero-3-phosphocholine = apo--[retinol-binding protein] + an all-trans-retinyl ester + a 2-acyl-sn-glycero-3-phosphocholine. The catalysed reaction is 1,2-dihexadecanoyl-sn-glycero-3-phosphocholine + all-trans-retinol = all-trans-retinyl hexadecanoate + 2-hexadecanoyl-sn-glycero-3-phosphocholine. It catalyses the reaction 1,2-diheptanoyl-sn-glycero-3-phosphocholine + all-trans-retinol--[retinol-binding protein] = all-trans-retinyl heptanoate + 2-heptanoyl-sn-glycero-3-phosphocholine + apo--[retinol-binding protein]. The enzyme catalyses 1,2-dioctanoyl-sn-glycero-3-phosphocholine + all-trans-retinol--[retinol-binding protein] = 2-octanoyl-sn-glycero-3-phosphocholine + all-trans-retinyl octanoate + apo--[retinol-binding protein]. It carries out the reaction all-trans-retinol--[retinol-binding protein] + 1,2-dihexadecanoyl-sn-glycero-3-phosphocholine = apo--[retinol-binding protein] + all-trans-retinyl hexadecanoate + 2-hexadecanoyl-sn-glycero-3-phosphocholine. The catalysed reaction is 1,2-didodecanoyl-sn-glycero-3-phosphocholine + all-trans-retinol--[retinol-binding protein] = 2-dodecanoyl-sn-glycero-3-phosphocholine + all-trans-retinyl dodecanoate + apo--[retinol-binding protein]. The protein operates within cofactor metabolism; retinol metabolism. Inhibited by all-trans-retinyl alpha-bromoacetate and N-boc-L-biocytinyl-11-aminoundecane chloro-methyl ketone (BACMK). Functionally, transfers the acyl group from the sn-1 position of phosphatidylcholine to all-trans retinol, producing all-trans retinyl esters. Retinyl esters are storage forms of vitamin A. LRAT plays a critical role in vision. It provides the all-trans retinyl ester substrates for the isomerohydrolase which processes the esters into 11-cis-retinol in the retinal pigment epithelium; due to a membrane-associated alcohol dehydrogenase, 11 cis-retinol is oxidized and converted into 11-cis-retinaldehyde which is the chromophore for rhodopsin and the cone photopigments. Required for the survival of cone photoreceptors and correct rod photoreceptor cell morphology. The sequence is that of Lecithin retinol acyltransferase from Homo sapiens (Human).